The following is a 393-amino-acid chain: Acetylornithine aminotransferase 1 (393 aa).

Arginine 131 lines the N(2)-acetyl-L-ornithine pocket. 215–218 (DEVQ) contributes to the pyridoxal 5'-phosphate binding site. Lysine 244 carries the post-translational modification N6-(pyridoxal phosphate)lysine. N(2)-acetyl-L-ornithine is bound at residue threonine 272. Threonine 273 provides a ligand contact to pyridoxal 5'-phosphate.

The protein belongs to the class-III pyridoxal-phosphate-dependent aminotransferase family. ArgD subfamily. As to quaternary structure, homodimer. Requires pyridoxal 5'-phosphate as cofactor.

It is found in the cytoplasm. The catalysed reaction is N(2)-acetyl-L-ornithine + 2-oxoglutarate = N-acetyl-L-glutamate 5-semialdehyde + L-glutamate. It participates in amino-acid biosynthesis; L-arginine biosynthesis; N(2)-acetyl-L-ornithine from L-glutamate: step 4/4. This is Acetylornithine aminotransferase 1 from Bordetella parapertussis (strain 12822 / ATCC BAA-587 / NCTC 13253).